The chain runs to 308 residues: MAEITAALVKELRDRTGAGMMDCKKALAENNGDIEASIDWLRTKGLAAAAKKAGRVAAEGLVGFATDGTRGALVEVNSETDFVGKNEQFQAFVRDVTQVALAEGITDIDALAAAPYPTGGTVAEQLTSNIATIGENQSLRRVALLTVNSGAVTGYVHNAAAPGMGKIGVLVALESSAGADVLEPLGKQLAMHVAAANPLALNGDDLDADLVARERAIAEEKAAQSGKPAEIVAKMVDGAIAKFRKENALLSQLFVMDGKTPVAEVVAAAGKDVGAAITLKGFVRFQLGEGIEKEESDFAAEVAAAAGV.

The segment at 80–83 (TDFV) is involved in Mg(2+) ion dislocation from EF-Tu.

The protein belongs to the EF-Ts family.

It localises to the cytoplasm. In terms of biological role, associates with the EF-Tu.GDP complex and induces the exchange of GDP to GTP. It remains bound to the aminoacyl-tRNA.EF-Tu.GTP complex up to the GTP hydrolysis stage on the ribosome. In Sphingopyxis alaskensis (strain DSM 13593 / LMG 18877 / RB2256) (Sphingomonas alaskensis), this protein is Elongation factor Ts.